Reading from the N-terminus, the 319-residue chain is ATP-dependent 6-phosphofructokinase (319 aa).

Residue G11 participates in ATP binding. 21–25 serves as a coordination point for ADP; the sequence is RAVVR. ATP is bound by residues 72-73 and 102-105; these read RC and GDGS. Residue D103 participates in Mg(2+) binding. 125–127 serves as a coordination point for substrate; the sequence is TID. The active-site Proton acceptor is the D127. Residue R154 coordinates ADP. Substrate is bound by residues R162 and 169 to 171; that span reads MGR. ADP contacts are provided by residues 185 to 187, R211, and 213 to 215; these read GAE and KKH. Residues E222, R243, and 249 to 252 contribute to the substrate site; that span reads HIQR.

Belongs to the phosphofructokinase type A (PFKA) family. ATP-dependent PFK group I subfamily. Prokaryotic clade 'B1' sub-subfamily. Homotetramer. Requires Mg(2+) as cofactor.

It localises to the cytoplasm. It catalyses the reaction beta-D-fructose 6-phosphate + ATP = beta-D-fructose 1,6-bisphosphate + ADP + H(+). Its pathway is carbohydrate degradation; glycolysis; D-glyceraldehyde 3-phosphate and glycerone phosphate from D-glucose: step 3/4. Allosterically activated by ADP and other diphosphonucleosides, and allosterically inhibited by phosphoenolpyruvate. Catalyzes the phosphorylation of D-fructose 6-phosphate to fructose 1,6-bisphosphate by ATP, the first committing step of glycolysis. This is ATP-dependent 6-phosphofructokinase from Bacillus velezensis (strain DSM 23117 / BGSC 10A6 / LMG 26770 / FZB42) (Bacillus amyloliquefaciens subsp. plantarum).